The following is a 189-amino-acid chain: Protein GrpE (189 aa).

Residues 1 to 37 (MSDSSKEKKKKFADMVSRQKGDDQQSDNHKQTDDLNE) are disordered. The segment covering 17 to 33 (SRQKGDDQQSDNHKQTD) has biased composition (basic and acidic residues).

This sequence belongs to the GrpE family. In terms of assembly, homodimer.

It is found in the cytoplasm. Functionally, participates actively in the response to hyperosmotic and heat shock by preventing the aggregation of stress-denatured proteins, in association with DnaK and GrpE. It is the nucleotide exchange factor for DnaK and may function as a thermosensor. Unfolded proteins bind initially to DnaJ; upon interaction with the DnaJ-bound protein, DnaK hydrolyzes its bound ATP, resulting in the formation of a stable complex. GrpE releases ADP from DnaK; ATP binding to DnaK triggers the release of the substrate protein, thus completing the reaction cycle. Several rounds of ATP-dependent interactions between DnaJ, DnaK and GrpE are required for fully efficient folding. The sequence is that of Protein GrpE from Wolbachia sp. subsp. Drosophila simulans (strain wRi).